We begin with the raw amino-acid sequence, 290 residues long: Nucleotide-binding protein BAV3158 (290 aa).

Residue 9 to 16 (GISGSGKS) coordinates ATP. 58–61 (DVRS) is a binding site for GTP.

It belongs to the RapZ-like family.

In terms of biological role, displays ATPase and GTPase activities. The protein is Nucleotide-binding protein BAV3158 of Bordetella avium (strain 197N).